We begin with the raw amino-acid sequence, 575 residues long: Phosphoenolpyruvate-protein phosphotransferase (575 aa).

Catalysis depends on H191, which acts as the Tele-phosphohistidine intermediate. Positions 298 and 334 each coordinate phosphoenolpyruvate. Residues E435 and D459 each coordinate Mg(2+). Residues 458–459 (ND) and R469 each bind phosphoenolpyruvate. C506 acts as the Proton donor in catalysis.

This sequence belongs to the PEP-utilizing enzyme family. In terms of assembly, homodimer. Requires Mg(2+) as cofactor.

The protein localises to the cytoplasm. It carries out the reaction L-histidyl-[protein] + phosphoenolpyruvate = N(pros)-phospho-L-histidyl-[protein] + pyruvate. Functionally, general (non sugar-specific) component of the phosphoenolpyruvate-dependent sugar phosphotransferase system (sugar PTS). This major carbohydrate active-transport system catalyzes the phosphorylation of incoming sugar substrates concomitantly with their translocation across the cell membrane. Enzyme I transfers the phosphoryl group from phosphoenolpyruvate (PEP) to the phosphoryl carrier protein (HPr). In Lactococcus lactis subsp. cremoris (Streptococcus cremoris), this protein is Phosphoenolpyruvate-protein phosphotransferase (ptsI).